The primary structure comprises 79 residues: RNA-binding protein Hfq (79 aa).

Positions 10–70 (DAFLNHVRKT…ISTIMPAQPI (61 aa)) constitute a Sm domain.

It belongs to the Hfq family. In terms of assembly, homohexamer.

In terms of biological role, RNA chaperone that binds small regulatory RNA (sRNAs) and mRNAs to facilitate mRNA translational regulation in response to envelope stress, environmental stress and changes in metabolite concentrations. Also binds with high specificity to tRNAs. This chain is RNA-binding protein Hfq, found in Ruegeria sp. (strain TM1040) (Silicibacter sp.).